The sequence spans 229 residues: Large ribosomal subunit protein uL1 (229 aa).

This sequence belongs to the universal ribosomal protein uL1 family. In terms of assembly, part of the 50S ribosomal subunit.

Binds directly to 23S rRNA. The L1 stalk is quite mobile in the ribosome, and is involved in E site tRNA release. Functionally, protein L1 is also a translational repressor protein, it controls the translation of the L11 operon by binding to its mRNA. This chain is Large ribosomal subunit protein uL1, found in Enterococcus faecalis (strain ATCC 700802 / V583).